Consider the following 240-residue polypeptide: tRNA (guanine-N(1)-)-methyltransferase (240 aa).

S-adenosyl-L-methionine is bound by residues glycine 112 and 132–137 (LGDFVL).

The protein belongs to the RNA methyltransferase TrmD family. Homodimer.

The protein localises to the cytoplasm. It carries out the reaction guanosine(37) in tRNA + S-adenosyl-L-methionine = N(1)-methylguanosine(37) in tRNA + S-adenosyl-L-homocysteine + H(+). In terms of biological role, specifically methylates guanosine-37 in various tRNAs. This Cyanothece sp. (strain PCC 7425 / ATCC 29141) protein is tRNA (guanine-N(1)-)-methyltransferase.